Here is a 90-residue protein sequence, read N- to C-terminus: Molybdopterin synthase sulfur carrier subunit (90 aa).

Gly90 bears the 1-thioglycine; alternate mark. At Gly90 the chain carries Glycyl adenylate; alternate.

This sequence belongs to the MoaD family. MOCS2A subfamily. Heterotetramer; composed of 2 small (Mocs2A) and 2 large (Mocs2B) subunits. In terms of processing, C-terminal thiocarboxylation occurs in 2 steps, it is first acyl-adenylated (-COAMP) via the hesA/moeB/thiF part of MOCS3, then thiocarboxylated (-COSH) via the rhodanese domain of MOCS3.

It localises to the cytoplasm. It functions in the pathway cofactor biosynthesis; molybdopterin biosynthesis. In terms of biological role, acts as a sulfur carrier required for molybdopterin biosynthesis. Component of the molybdopterin synthase complex that catalyzes the conversion of precursor Z into molybdopterin by mediating the incorporation of 2 sulfur atoms into precursor Z to generate a dithiolene group. In the complex, serves as sulfur donor by being thiocarboxylated (-COSH) at its C-terminus by MOCS3. After interaction with Mocs2B, the sulfur is then transferred to precursor Z to form molybdopterin. This chain is Molybdopterin synthase sulfur carrier subunit, found in Drosophila yakuba (Fruit fly).